The chain runs to 462 residues: Exodeoxyribonuclease 7 large subunit (462 aa).

Belongs to the XseA family. As to quaternary structure, heterooligomer composed of large and small subunits.

The protein resides in the cytoplasm. It carries out the reaction Exonucleolytic cleavage in either 5'- to 3'- or 3'- to 5'-direction to yield nucleoside 5'-phosphates.. Its function is as follows. Bidirectionally degrades single-stranded DNA into large acid-insoluble oligonucleotides, which are then degraded further into small acid-soluble oligonucleotides. The polypeptide is Exodeoxyribonuclease 7 large subunit (Proteus mirabilis (strain HI4320)).